The sequence spans 382 residues: Mannitol-1-phosphate 5-dehydrogenase (382 aa).

3–14 is an NAD(+) binding site; the sequence is ALHFGAGNIGRG.

The protein belongs to the mannitol dehydrogenase family.

The enzyme catalyses D-mannitol 1-phosphate + NAD(+) = beta-D-fructose 6-phosphate + NADH + H(+). The sequence is that of Mannitol-1-phosphate 5-dehydrogenase from Salmonella agona (strain SL483).